Here is a 264-residue protein sequence, read N- to C-terminus: Matrilysin (264 aa).

The first 17 residues, 1–17 (MQLTLFCFVCLLPGHLA), serve as a signal peptide directing secretion. Residues 18–94 (LPLSQEAGDV…PRCGVPDVAE (77 aa)) constitute a propeptide, activation peptide. Residues 85–92 (PRCGVPDV) carry the Cysteine switch motif. A Zn(2+)-binding site is contributed by C87. D153 contacts Ca(2+). H163 and D165 together coordinate Zn(2+). 4 residues coordinate Ca(2+): D170, G171, G173, and T175. H178 lines the Zn(2+) pocket. Ca(2+) contacts are provided by G185, G187, and D189. A Zn(2+)-binding site is contributed by H191. Ca(2+) contacts are provided by D193 and E196. Position 214 (H214) interacts with Zn(2+). E215 is a catalytic residue. Zn(2+) is bound by residues H218 and H224.

This sequence belongs to the peptidase M10A family. Requires Ca(2+) as cofactor. The cofactor is Zn(2+). In terms of tissue distribution, expressed in the intestinal epithelium (at protein level).

It is found in the secreted. It localises to the extracellular space. The protein localises to the extracellular matrix. It carries out the reaction Cleavage of 14-Ala-|-Leu-15 and 16-Tyr-|-Leu-17 in B chain of insulin. No action on collagen types I, II, IV, V. Cleaves gelatin chain alpha2(I) &gt; alpha1(I).. In terms of biological role, degrades casein, gelatins of types I, III, IV, and V, and fibronectin. Activates procollagenase. Functionally, may play a role in tissue reorganization. The protein is Matrilysin (Mmp7) of Mus musculus (Mouse).